Consider the following 207-residue polypeptide: Sodium/potassium-transporting ATPase subunit beta-1-interacting protein 1 (207 aa).

3 consecutive transmembrane segments (helical) span residues 2–22, 35–55, and 62–82; these read GRCDGRCTLVVICCLQLVAAL, APILANFLHIMAVILGVFGTV, and LILYAVWLVVWVGWNSFIICF. Asparagine 100 carries N-linked (GlcNAc...) asparagine glycosylation. Residues 147–167 form a helical membrane-spanning segment; sequence VVSSALQVFLALFGFVYACYV.

It belongs to the NKAIN family. As to quaternary structure, interacts with atp1b1 C-terminus.

Its subcellular location is the cell membrane. The chain is Sodium/potassium-transporting ATPase subunit beta-1-interacting protein 1 (nkain1) from Danio rerio (Zebrafish).